The sequence spans 196 residues: Protein GrpE (196 aa).

A disordered region spans residues 1 to 40; sequence MSSKEQKTPEGQAPEEIIMDQHEEVEAVEPNDSAEQVDPR.

This sequence belongs to the GrpE family. As to quaternary structure, homodimer.

The protein resides in the cytoplasm. In terms of biological role, participates actively in the response to hyperosmotic and heat shock by preventing the aggregation of stress-denatured proteins, in association with DnaK and GrpE. It is the nucleotide exchange factor for DnaK and may function as a thermosensor. Unfolded proteins bind initially to DnaJ; upon interaction with the DnaJ-bound protein, DnaK hydrolyzes its bound ATP, resulting in the formation of a stable complex. GrpE releases ADP from DnaK; ATP binding to DnaK triggers the release of the substrate protein, thus completing the reaction cycle. Several rounds of ATP-dependent interactions between DnaJ, DnaK and GrpE are required for fully efficient folding. The sequence is that of Protein GrpE from Salmonella enteritidis PT4 (strain P125109).